The primary structure comprises 179 residues: Large ribosomal subunit protein uL5 (179 aa).

Belongs to the universal ribosomal protein uL5 family. Part of the 50S ribosomal subunit; part of the 5S rRNA/L5/L18/L25 subcomplex. Contacts the 5S rRNA and the P site tRNA. Forms a bridge to the 30S subunit in the 70S ribosome.

This is one of the proteins that bind and probably mediate the attachment of the 5S RNA into the large ribosomal subunit, where it forms part of the central protuberance. In the 70S ribosome it contacts protein S13 of the 30S subunit (bridge B1b), connecting the 2 subunits; this bridge is implicated in subunit movement. Contacts the P site tRNA; the 5S rRNA and some of its associated proteins might help stabilize positioning of ribosome-bound tRNAs. The sequence is that of Large ribosomal subunit protein uL5 from Natranaerobius thermophilus (strain ATCC BAA-1301 / DSM 18059 / JW/NM-WN-LF).